The primary structure comprises 371 residues: Epoxyqueuosine reductase (371 aa).

Residue Asp137 is the Proton donor of the active site. Residues 179-211 (IPLPVDTPVENQCGKCTACISSCPTNAILENGV) enclose the 4Fe-4S ferredoxin-type domain. Cys191, Cys194, Cys197, Cys201, Cys217, Cys244, Cys247, and Cys251 together coordinate [4Fe-4S] cluster.

It belongs to the QueG family. Monomer. It depends on cob(II)alamin as a cofactor. Requires [4Fe-4S] cluster as cofactor.

It localises to the cytoplasm. The enzyme catalyses epoxyqueuosine(34) in tRNA + AH2 = queuosine(34) in tRNA + A + H2O. Its pathway is tRNA modification; tRNA-queuosine biosynthesis. In terms of biological role, catalyzes the conversion of epoxyqueuosine (oQ) to queuosine (Q), which is a hypermodified base found in the wobble positions of tRNA(Asp), tRNA(Asn), tRNA(His) and tRNA(Tyr). The protein is Epoxyqueuosine reductase of Aliivibrio fischeri (strain ATCC 700601 / ES114) (Vibrio fischeri).